The primary structure comprises 180 residues: Translation initiation factor IF-3 (180 aa).

The protein belongs to the IF-3 family. As to quaternary structure, monomer.

The protein resides in the cytoplasm. IF-3 binds to the 30S ribosomal subunit and shifts the equilibrium between 70S ribosomes and their 50S and 30S subunits in favor of the free subunits, thus enhancing the availability of 30S subunits on which protein synthesis initiation begins. This is Translation initiation factor IF-3 from Escherichia coli (strain K12 / MC4100 / BW2952).